Consider the following 361-residue polypeptide: Solute carrier family 25 member 3 (361 aa).

The N-terminal 49 residues, 1 to 49 (MFSSVAHLARANPFNTPHLQLVHDGLGDFRSRPPGPTGQPRRPRNLAAA), are a transit peptide targeting the mitochondrion. The interval 25–44 (GLGDFRSRPPGPTGQPRRPR) is disordered. Residues 50–62 (AVEEYSCEFGSAK) are Mitochondrial intermembrane-facing. Solcar repeat units lie at residues 62–146 (KYYA…FKVL), 159–243 (WRTS…TVEA), and 260–338 (EQLV…VKVY). The chain crosses the membrane as a helical span at residues 63–85 (YYALCGFGGVLSCGLTHTAVVPL). Residues 86 to 120 (DLVKCRMQVDPQKYKGIFNGFSVTLKEDGVRGLAK) lie on the Mitochondrial matrix side of the membrane. Lys-98 is subject to N6-acetyllysine. Lys-111 carries the N6-methyllysine modification. The helical transmembrane segment at 121 to 140 (GWAPTFLGYSMQGLCKFGFY) threads the bilayer. Residues 141–160 (EVFKVLYSNMLGEENTYLWR) lie on the Mitochondrial intermembrane side of the membrane. The chain crosses the membrane as a helical span at residues 161-182 (TSLYLAASASAEFFADIALAPM). The Mitochondrial matrix segment spans residues 183 to 217 (EAAKVRIQTQPGYANTLRDAAPKMYKEEGLKAFYK). Residue Tyr-195 is modified to Phosphotyrosine. N6-acetyllysine is present on Lys-208. A helical membrane pass occupies residues 218-237 (GVAPLWMRQIPYTMMKFACF). Residues 238–260 (ERTVEALYKFVVPKPRSECSKPE) are Mitochondrial intermembrane-facing. A helical membrane pass occupies residues 261–283 (QLVVTFVAGYIAGVFCAIVSHPA). Over 284-313 (DSVVSVLNKEKGSSASLVLKRLGFKGVWKG) the chain is Mitochondrial matrix. A helical membrane pass occupies residues 314–332 (LFARIIMIGTLTALQWFIY). Residues 333 to 361 (DSVKVYFRLPRPPPPEMPESLKKKLGLTQ) lie on the Mitochondrial intermembrane side of the membrane.

This sequence belongs to the mitochondrial carrier (TC 2.A.29) family. In terms of assembly, interacts with PPIF; the interaction is impaired by CsA.

It localises to the mitochondrion inner membrane. It catalyses the reaction phosphate(in) + H(+)(in) = phosphate(out) + H(+)(out). In terms of biological role, inorganic ion transporter that transports phosphate or copper ions across the mitochondrial inner membrane into the matrix compartment. Mediates proton-coupled symport of phosphate ions necessary for mitochondrial oxidative phosphorylation of ADP to ATP. Transports copper ions probably in the form of anionic copper(I) complexes to maintain mitochondrial matrix copper pool and to supply copper for cytochrome C oxidase complex assembly. May also play a role in regulation of the mitochondrial permeability transition pore (mPTP). The sequence is that of Solute carrier family 25 member 3 from Pongo abelii (Sumatran orangutan).